A 102-amino-acid polypeptide reads, in one-letter code: NADH-quinone oxidoreductase subunit K 1 (102 aa).

Helical transmembrane passes span 5–25 (LSHYLTVSAILFTLGVFGIFL), 31–51 (IVILMSVELILLSVNINMVAF), and 65–85 (LFILTVAAAEAAIGLAILVVF).

The protein belongs to the complex I subunit 4L family. NDH-1 is composed of 14 different subunits. Subunits NuoA, H, J, K, L, M, N constitute the membrane sector of the complex.

It localises to the cell inner membrane. It catalyses the reaction a quinone + NADH + 5 H(+)(in) = a quinol + NAD(+) + 4 H(+)(out). In terms of biological role, NDH-1 shuttles electrons from NADH, via FMN and iron-sulfur (Fe-S) centers, to quinones in the respiratory chain. The immediate electron acceptor for the enzyme in this species is believed to be ubiquinone. Couples the redox reaction to proton translocation (for every two electrons transferred, four hydrogen ions are translocated across the cytoplasmic membrane), and thus conserves the redox energy in a proton gradient. This chain is NADH-quinone oxidoreductase subunit K 1, found in Rhizobium etli (strain CIAT 652).